The following is a 492-amino-acid chain: Trypanothione reductase (492 aa).

Residue 36-52 (DVQMVHGPPFFSALGGT) coordinates FAD. Cys53 and Cys58 are joined by a disulfide. The active-site Proton acceptor is His461.

It belongs to the class-I pyridine nucleotide-disulfide oxidoreductase family. As to quaternary structure, homodimer. Requires FAD as cofactor.

The protein resides in the cytoplasm. The enzyme catalyses trypanothione + NADP(+) = trypanothione disulfide + NADPH + H(+). Its function is as follows. Trypanothione is the parasite analog of glutathione; this enzyme is the equivalent of glutathione reductase. The chain is Trypanothione reductase (TPR) from Trypanosoma cruzi.